Here is a 262-residue protein sequence, read N- to C-terminus: Small ribosomal subunit protein eS4 (262 aa).

In terms of domain architecture, S4 RNA-binding spans 42–104; the sequence is LPLILILRNR…TNEDFRLLYD (63 aa).

The protein belongs to the eukaryotic ribosomal protein eS4 family.

Its subcellular location is the cytoplasm. This chain is Small ribosomal subunit protein eS4 (RPS4), found in Gossypium hirsutum (Upland cotton).